The following is a 271-amino-acid chain: Methylthioribulose-1-phosphate dehydratase (271 aa).

Residue cysteine 123 participates in substrate binding. Zn(2+)-binding residues include histidine 141 and histidine 143. Glutamate 166 (proton donor/acceptor) is an active-site residue. Histidine 231 is a Zn(2+) binding site.

Belongs to the aldolase class II family. MtnB subfamily. Requires Zn(2+) as cofactor.

It is found in the cytoplasm. The catalysed reaction is 5-(methylsulfanyl)-D-ribulose 1-phosphate = 5-methylsulfanyl-2,3-dioxopentyl phosphate + H2O. Its pathway is amino-acid biosynthesis; L-methionine biosynthesis via salvage pathway; L-methionine from S-methyl-5-thio-alpha-D-ribose 1-phosphate: step 2/6. Functionally, catalyzes the dehydration of methylthioribulose-1-phosphate (MTRu-1-P) into 2,3-diketo-5-methylthiopentyl-1-phosphate (DK-MTP-1-P). This chain is Methylthioribulose-1-phosphate dehydratase, found in Candida dubliniensis (strain CD36 / ATCC MYA-646 / CBS 7987 / NCPF 3949 / NRRL Y-17841) (Yeast).